We begin with the raw amino-acid sequence, 100 residues long: NADH-quinone oxidoreductase subunit K (100 aa).

The next 3 membrane-spanning stretches (helical) occupy residues 4-24, 28-48, and 60-80; these read LFHGLFLSLILFILGLTSLIV, ILFILISLEIMMNAVGLALIV, and IMYIFVITLAASEASIALALL.

Belongs to the complex I subunit 4L family. In terms of assembly, NDH-1 is composed of 13 different subunits. Subunits NuoA, H, J, K, L, M, N constitute the membrane sector of the complex.

It is found in the cell membrane. It catalyses the reaction a quinone + NADH + 5 H(+)(in) = a quinol + NAD(+) + 4 H(+)(out). In terms of biological role, NDH-1 shuttles electrons from NADH, via FMN and iron-sulfur (Fe-S) centers, to quinones in the respiratory chain. The immediate electron acceptor for the enzyme in this species is believed to be ubiquinone. Couples the redox reaction to proton translocation (for every two electrons transferred, four hydrogen ions are translocated across the cytoplasmic membrane), and thus conserves the redox energy in a proton gradient. This Buchnera aphidicola subsp. Acyrthosiphon pisum (strain 5A) protein is NADH-quinone oxidoreductase subunit K.